Consider the following 288-residue polypeptide: ATP synthase gamma chain (288 aa).

This sequence belongs to the ATPase gamma chain family. In terms of assembly, F-type ATPases have 2 components, CF(1) - the catalytic core - and CF(0) - the membrane proton channel. CF(1) has five subunits: alpha(3), beta(3), gamma(1), delta(1), epsilon(1). CF(0) has three main subunits: a, b and c.

The protein resides in the cell inner membrane. Its function is as follows. Produces ATP from ADP in the presence of a proton gradient across the membrane. The gamma chain is believed to be important in regulating ATPase activity and the flow of protons through the CF(0) complex. This chain is ATP synthase gamma chain, found in Haemophilus ducreyi (strain 35000HP / ATCC 700724).